Consider the following 577-residue polypeptide: MASILSKKQKKNEKYTLKELKSLGHDLLTSRSHINNLPLLLTFVSPESPPQFVVESLLSLQSFFTPLLSQLPPTSSSPSSTKTEDPEVVFKAWLRSKFDEFVKLLLDVLVSQQSEDSLRGIVLGTLMEFVKLLNAGRFHSSIYHRLLDAIIHSEVDIEIFLDILTSKYFKYIDVRYFTYISMEKFVKTLEASVSADRTVIENNEAESDSKESLELSVRKIYQVLSQIPPPEKQAEKSQHEMWSGSDESISEKPTDKKKKTEKGDSTLLSPATISKRMKLKFTKAWISFLRLPLPIDVYKEVLASIHLTVIPHLSNPTMLCDFLTKSYDIGGVVSVMALSSLFILMTQHGLEYPFFYEKLYALLVPSVFVAKHRAKFLQLLDACLKSSMLPAYLAASFTKKLSRLSLSIPPAGSLVITALIYNLLRRNPTINHLVQEIVENADEANTEAGEHNESQPKTIKKRKLGIDYFNNQESDPKKSGALKSSLWEIDTLRHHYCPPVSRFISSLETNLTIRSKTTEMKIEDFCSGSYATIFGDEIRRRVKQVPLAFYKTVPTSLFADSDFPGWTFTIPQEEGTC.

Positions 230-263 (PEKQAEKSQHEMWSGSDESISEKPTDKKKKTEKG) are disordered. Transmembrane regions (helical) follow at residues 329-349 (IGGVVSVMALSSLFILMTQHG), 350-370 (LEYPFFYEKLYALLVPSVFVA), and 404-424 (LSLSIPPAGSLVITALIYNLL).

The protein belongs to the CBF/MAK21 family. In terms of assembly, component of the ribosomal small subunit (SSU) processome composed of at least 40 protein subunits and snoRNA U3. Mostly expressed in flowers and stems and at lower levels in roots, hypocotyls, siliques, leaves and seeds.

It is found in the nucleus membrane. The protein localises to the nucleus. Its subcellular location is the nucleolus. Functionally, essential protein required during embryogenesis. Involved in nucleolar processing of ribosomal RNA (rRNA) 40S and 90S ribosomal subunits and ribosome assembly; early in ribosome biogenesis, especially required during the maturation of 5.8S rRNA. Has a role in the nuclear export of 40S pre-ribosomal subunit to the cytoplasm. The sequence is that of Protein NUCLEOLAR COMPLEX ASSOCIATED 4 from Arabidopsis thaliana (Mouse-ear cress).